Consider the following 630-residue polypeptide: 1-deoxy-D-xylulose-5-phosphate synthase (630 aa).

Thiamine diphosphate-binding positions include His-72 and 113–115; that span reads GHS. Asp-144 is a binding site for Mg(2+). Residues 145–146, Asn-173, Tyr-284, and Glu-367 each bind thiamine diphosphate; that span reads GA. Asn-173 serves as a coordination point for Mg(2+).

Belongs to the transketolase family. DXPS subfamily. Homodimer. Mg(2+) serves as cofactor. Thiamine diphosphate is required as a cofactor.

It catalyses the reaction D-glyceraldehyde 3-phosphate + pyruvate + H(+) = 1-deoxy-D-xylulose 5-phosphate + CO2. The protein operates within metabolic intermediate biosynthesis; 1-deoxy-D-xylulose 5-phosphate biosynthesis; 1-deoxy-D-xylulose 5-phosphate from D-glyceraldehyde 3-phosphate and pyruvate: step 1/1. In terms of biological role, catalyzes the acyloin condensation reaction between C atoms 2 and 3 of pyruvate and glyceraldehyde 3-phosphate to yield 1-deoxy-D-xylulose-5-phosphate (DXP). In Bacillus cereus (strain B4264), this protein is 1-deoxy-D-xylulose-5-phosphate synthase.